Consider the following 327-residue polypeptide: Ribosomal RNA small subunit methyltransferase H (327 aa).

S-adenosyl-L-methionine contacts are provided by residues Gly-37–Tyr-39, Asp-55, Phe-82, Asp-99, and Gln-106. The tract at residues Ile-303 to Phe-327 is disordered.

Belongs to the methyltransferase superfamily. RsmH family.

The protein localises to the cytoplasm. It catalyses the reaction cytidine(1402) in 16S rRNA + S-adenosyl-L-methionine = N(4)-methylcytidine(1402) in 16S rRNA + S-adenosyl-L-homocysteine + H(+). Functionally, specifically methylates the N4 position of cytidine in position 1402 (C1402) of 16S rRNA. This chain is Ribosomal RNA small subunit methyltransferase H, found in Jannaschia sp. (strain CCS1).